The following is a 278-amino-acid chain: Non-heme chloroperoxidase (278 aa).

An AB hydrolase-1 domain is found at 24-259 (PIVFHHGWPL…LKTYPGYSHG (236 aa)). Residues S97, D229, and H258 contribute to the active site.

Belongs to the AB hydrolase superfamily. Bacterial non-heme haloperoxidase / perhydrolase family. Homodimer.

Its function is as follows. Chlorinates and brominates suitable organic compounds. Involved in the biosynthesis of the antibiotic pyrrolnitrin. This Burkholderia pyrrocinia (Pseudomonas pyrrocinia) protein is Non-heme chloroperoxidase (cpo).